The sequence spans 421 residues: UDP-N-acetylglucosamine 1-carboxyvinyltransferase (421 aa).

22–23 (KN) serves as a coordination point for phosphoenolpyruvate. Arginine 93 provides a ligand contact to UDP-N-acetyl-alpha-D-glucosamine. The active-site Proton donor is the cysteine 117. At cysteine 117 the chain carries 2-(S-cysteinyl)pyruvic acid O-phosphothioketal. Residues 122–126 (RPVDQ), aspartate 309, and isoleucine 331 each bind UDP-N-acetyl-alpha-D-glucosamine.

It belongs to the EPSP synthase family. MurA subfamily.

The protein localises to the cytoplasm. The catalysed reaction is phosphoenolpyruvate + UDP-N-acetyl-alpha-D-glucosamine = UDP-N-acetyl-3-O-(1-carboxyvinyl)-alpha-D-glucosamine + phosphate. The protein operates within cell wall biogenesis; peptidoglycan biosynthesis. Functionally, cell wall formation. Adds enolpyruvyl to UDP-N-acetylglucosamine. The protein is UDP-N-acetylglucosamine 1-carboxyvinyltransferase of Albidiferax ferrireducens (strain ATCC BAA-621 / DSM 15236 / T118) (Rhodoferax ferrireducens).